The chain runs to 380 residues: Cytochrome b (380 aa).

4 helical membrane-spanning segments follow: residues 34–54, 78–99, 114–134, and 179–199; these read FGSL…LLAM, WLIR…FLHI, WNTG…GYVL, and FFAL…IHLI. Residues His-84 and His-98 each coordinate heme b. Heme b contacts are provided by His-183 and His-197. His-202 provides a ligand contact to a ubiquinone. The next 4 helical transmembrane spans lie at 227–247, 289–309, 321–341, and 348–368; these read LKDI…ALFS, LGGV…PFLH, LSQT…WVGS, and FIII…ILFP.

This sequence belongs to the cytochrome b family. As to quaternary structure, the cytochrome bc1 complex contains 11 subunits: 3 respiratory subunits (MT-CYB, CYC1 and UQCRFS1), 2 core proteins (UQCRC1 and UQCRC2) and 6 low-molecular weight proteins (UQCRH/QCR6, UQCRB/QCR7, UQCRQ/QCR8, UQCR10/QCR9, UQCR11/QCR10 and a cleavage product of UQCRFS1). This cytochrome bc1 complex then forms a dimer. The cofactor is heme b.

The protein localises to the mitochondrion inner membrane. In terms of biological role, component of the ubiquinol-cytochrome c reductase complex (complex III or cytochrome b-c1 complex) that is part of the mitochondrial respiratory chain. The b-c1 complex mediates electron transfer from ubiquinol to cytochrome c. Contributes to the generation of a proton gradient across the mitochondrial membrane that is then used for ATP synthesis. This is Cytochrome b (MT-CYB) from Tragopan temminckii (Temminck's tragopan).